The following is a 622-amino-acid chain: Membrane protein insertase YidC (622 aa).

Residues 8-28 traverse the membrane as a helical segment; it reads LFLALILSMGIWMGVNYFFFP. The span at 33 to 61 shows a compositional bias: basic and acidic residues; it reads KTSETKEVKVDKPSDDKQDQIQKEKKESR. Residues 33-70 are disordered; it reads KTSETKEVKVDKPSDDKQDQIQKEKKESRTTIPSKGTK. Transmembrane regions (helical) follow at residues 413 to 433, 484 to 504, 532 to 552, and 571 to 591; these read FTIPNYGWSIIIFAILFKLVF, VGGCLPMVIQIPIFIALYTAF, AIPYFTQTGIGLNLLALLMVG, and MLMYVMPVMMLYIFWNMPSGV.

Belongs to the OXA1/ALB3/YidC family. Type 1 subfamily. Interacts with the Sec translocase complex via SecD. Specifically interacts with transmembrane segments of nascent integral membrane proteins during membrane integration.

Its subcellular location is the cell inner membrane. Its function is as follows. Required for the insertion and/or proper folding and/or complex formation of integral membrane proteins into the membrane. Involved in integration of membrane proteins that insert both dependently and independently of the Sec translocase complex, as well as at least some lipoproteins. Aids folding of multispanning membrane proteins. The protein is Membrane protein insertase YidC of Leptospira borgpetersenii serovar Hardjo-bovis (strain JB197).